The chain runs to 337 residues: MKLSEIARRLGCTLDNCPDPDAVEITAVTGIEAAGPTDITFVSNPRYAAAAKTTHAGAIIVSDDFTAGRAPLVRSKNPYLTFAKAIELFYQAPKYAPGIHPTAVISPTAKVGANASIGPYVVIEDNVAIGANCVLRAHVVIYEGVTIGDNFFAHAHAVVREHCRIGNNVILQNGVVIGADGYGFARDTDGWYKIAQSGTTILDDNVEVQANSTVDRASIGETHIYADAKIDNLVMIGHGSSVGEHSLLCSQVGLAGSSHVGKNVILAGQVGVAGHLHIGDGVIAAGQTGVQNDIEPGKRIGGSPSYDHKQWIRSWQIQTRLPEIVKELRNLASKKSE.

Residue H238 is the Proton acceptor of the active site.

It belongs to the transferase hexapeptide repeat family. LpxD subfamily. Homotrimer.

It carries out the reaction a UDP-3-O-[(3R)-3-hydroxyacyl]-alpha-D-glucosamine + a (3R)-hydroxyacyl-[ACP] = a UDP-2-N,3-O-bis[(3R)-3-hydroxyacyl]-alpha-D-glucosamine + holo-[ACP] + H(+). It functions in the pathway bacterial outer membrane biogenesis; LPS lipid A biosynthesis. Catalyzes the N-acylation of UDP-3-O-acylglucosamine using 3-hydroxyacyl-ACP as the acyl donor. Is involved in the biosynthesis of lipid A, a phosphorylated glycolipid that anchors the lipopolysaccharide to the outer membrane of the cell. The protein is UDP-3-O-acylglucosamine N-acyltransferase 1 of Koribacter versatilis (strain Ellin345).